The sequence spans 570 residues: Proline--tRNA ligase (570 aa).

It belongs to the class-II aminoacyl-tRNA synthetase family. ProS type 1 subfamily. In terms of assembly, homodimer.

It localises to the cytoplasm. It catalyses the reaction tRNA(Pro) + L-proline + ATP = L-prolyl-tRNA(Pro) + AMP + diphosphate. Catalyzes the attachment of proline to tRNA(Pro) in a two-step reaction: proline is first activated by ATP to form Pro-AMP and then transferred to the acceptor end of tRNA(Pro). As ProRS can inadvertently accommodate and process non-cognate amino acids such as alanine and cysteine, to avoid such errors it has two additional distinct editing activities against alanine. One activity is designated as 'pretransfer' editing and involves the tRNA(Pro)-independent hydrolysis of activated Ala-AMP. The other activity is designated 'posttransfer' editing and involves deacylation of mischarged Ala-tRNA(Pro). The misacylated Cys-tRNA(Pro) is not edited by ProRS. In Geobacter metallireducens (strain ATCC 53774 / DSM 7210 / GS-15), this protein is Proline--tRNA ligase.